A 729-amino-acid polypeptide reads, in one-letter code: Disintegrin and metalloproteinase domain-containing protein 21 (729 aa).

Residues 1–39 (MECFIMLGADARTLMRVTLLLLWLKALPSLIDLSQTGST) form the signal peptide. Positions 40 to 209 (QYLSSPEVVI…MKQNYGKLWP (170 aa)) are excised as a propeptide. N169 carries an N-linked (GlcNAc...) asparagine glycan. The short motif at 176 to 183 (MLCSLTEK) is the Cysteine switch element. C178 contributes to the Zn(2+) binding site. The Extracellular portion of the chain corresponds to 210-685 (HMWFLELAVV…DSGPTSQKRR (476 aa)). The 191-residue stretch at 212–402 (WFLELAVVVD…NQGTCLYNHP (191 aa)) folds into the Peptidase M12B domain. N231 carries an N-linked (GlcNAc...) asparagine glycan. 3 cysteine pairs are disulfide-bonded: C320-C397, C360-C382, and C362-C367. Residue H345 participates in Zn(2+) binding. E346 is a catalytic residue. The Zn(2+) site is built by H349 and H355. N-linked (GlcNAc...) asparagine glycosylation is found at N381, N441, and N482. The region spanning 410 to 496 (VKRCGNGMVE…QCPEDGYVQD (87 aa)) is the Disintegrin domain. Cystine bridges form between C468/C488, C638/C649, C643/C655, and C657/C666. Residues 638–667 (CLPETCNRKGVCNNKHHCHCDYGWSPPFCL) form the EGF-like domain. Residues 686-706 (VIITVLSITVPVLSILICLLI) traverse the membrane as a helical segment. Over 707–729 (AGLYRIYCKIPSGPKETKASSPG) the chain is Cytoplasmic.

It depends on Zn(2+) as a cofactor. Has no obvious cleavage site for furin endopeptidase, suggesting that the proteolytic processing is regulated. In terms of tissue distribution, highly expressed in Leydig cells. Expressed also in cauda epididymidis, vas deferens, convoluted tubules, kidney and the parietal cells of stomach. Not detected on developing spermatocytes or mature sperm.

The protein resides in the membrane. Its function is as follows. May be involved in sperm maturation and/or fertilization. May also be involved in epithelia functions associated with establishing and maintaining gradients of ions or nutrients. The polypeptide is Disintegrin and metalloproteinase domain-containing protein 21 (Adam21) (Mus musculus (Mouse)).